Consider the following 441-residue polypeptide: Nucleoprotein (441 aa).

The interval 1 to 56 (MSYTPGHHAGSRSSSGNRSGILKKTSWVDQSERSHQTYNRGRKPQPKFTVSTQPQG) is disordered. Residues 11–20 (SRSSSGNRSG) show a composition bias toward low complexity. The segment at 53–193 (QPQGNPIPHY…GYYVEGSGRS (141 aa)) is RNA-binding. Residues 60–189 (PHYSWFSGIT…ILPQGYYVEG (130 aa)) form the CoV N NTD domain. Residues Arg105 and Arg121 each contribute to the RNA site. Ser158 is subject to Phosphoserine; by host. An RNA-binding site is contributed by Arg163. Thr173 bears the Phosphothreonine; by host mark. Residues 186-226 (YVEGSGRSASNSRPGSRSQSRGPNNRSLSRSNSNFRHSDSI) are disordered. Over residues 189-220 (GSGRSASNSRPGSRSQSRGPNNRSLSRSNSNF) the composition is skewed to low complexity. At Ser190 the chain carries Phosphoserine; by host. A CoV N CTD domain is found at 257–379 (AKEIRHKILM…ENLDAYVNSN (123 aa)). Positions 264-382 (ILMKPRQKRT…DAYVNSNQNT (119 aa)) are dimerization. The segment covering 380–389 (QNTVSGSLSP) has biased composition (polar residues). A disordered region spans residues 380-408 (QNTVSGSLSPKPQRKRGVKQSPESFDSLN). A phosphoserine; by host mark is found at Ser388 and Ser417. A Phosphothreonine; by host modification is found at Thr421.

The protein belongs to the betacoronavirus nucleocapsid protein family. In terms of assembly, homooligomer. Both monomeric and oligomeric forms interact with RNA. Interacts with protein M. Interacts with NSP3; this interaction serves to tether the genome to the newly translated replicase-transcriptase complex at a very early stage of infection. Post-translationally, ADP-ribosylated. The ADP-ribosylation is retained in the virion during infection. Phosphorylated on serine and threonine residues.

It is found in the virion. The protein localises to the host endoplasmic reticulum-Golgi intermediate compartment. The protein resides in the host Golgi apparatus. Functionally, packages the positive strand viral genome RNA into a helical ribonucleocapsid (RNP) and plays a fundamental role during virion assembly through its interactions with the viral genome and membrane protein M. Plays an important role in enhancing the efficiency of subgenomic viral RNA transcription as well as viral replication. The protein is Nucleoprotein of Homo sapiens (Human).